Consider the following 1812-residue polypeptide: Protein virilizer homolog (1812 aa).

Residue alanine 2 is modified to N-acetylalanine. Disordered regions lie at residues isoleucine 132–serine 302 and lysine 576–arginine 596. Serine 133 and serine 138 each carry phosphoserine. Residues proline 139–glutamine 152 show a composition bias toward pro residues. The span at lysine 160–glutamine 169 shows a compositional bias: basic and acidic residues. A Phosphoserine modification is found at serine 173. Pro residues predominate over residues proline 174–proline 190. Phosphothreonine is present on threonine 184. Position 222 is a phosphoserine (serine 222). Positions aspartate 224–glutamine 233 are enriched in polar residues. 2 stretches are compositionally biased toward acidic residues: residues tyrosine 234 to aspartate 266 and isoleucine 274 to serine 302. The span at serine 584–arginine 596 shows a compositional bias: basic and acidic residues. A Phosphotyrosine modification is found at tyrosine 914. A Phosphoserine modification is found at serine 1579. Disordered stretches follow at residues histidine 1616–proline 1635 and lysine 1663–arginine 1812. Positions glycine 1689–glycine 1698 are enriched in gly residues. At threonine 1708 the chain carries Phosphothreonine. Arginine 1723 is subject to Omega-N-methylarginine. Polar residues predominate over residues arginine 1723–asparagine 1748. Arginine 1741 is modified (asymmetric dimethylarginine; alternate). The residue at position 1741 (arginine 1741) is an Omega-N-methylarginine; alternate. An asymmetric dimethylarginine mark is found at arginine 1773, arginine 1775, and arginine 1793. Positions glycine 1788–glycine 1802 are enriched in gly residues. Basic residues predominate over residues arginine 1803–arginine 1812.

The protein belongs to the vir family. In terms of assembly, component of the WMM complex, a N6-methyltransferase complex composed of a catalytic subcomplex, named MAC, and of an associated subcomplex, named MACOM. The MAC subcomplex is composed of METTL3 and METTL14. The MACOM subcomplex is composed of WTAP, ZC3H13, CBLL1/HAKAI, VIRMA, and, in some cases of RBM15 (RBM15 or RBM15B). Interacts with WTAP. Also a component of a MACOM-like complex, named WTAP complex, composed of WTAP, ZC3H13, CBLL1, VIRMA, RBM15, BCLAF1 and THRAP3. Interacts with NUDT21 and CPSF6.

It is found in the nucleus speckle. The protein resides in the nucleus. The protein localises to the nucleoplasm. Its subcellular location is the cytoplasm. Functionally, associated component of the WMM complex, a complex that mediates N6-methyladenosine (m6A) methylation of RNAs, a modification that plays a role in the efficiency of mRNA splicing and RNA processing. Acts as a key regulator of m6A methylation by promoting m6A methylation of mRNAs in the 3'-UTR near the stop codon: recruits the catalytic core components METTL3 and METTL14, thereby guiding m6A methylation at specific sites. Required for mRNA polyadenylation via its role in selective m6A methylation: m6A methylation of mRNAs in the 3'-UTR near the stop codon correlating with alternative polyadenylation (APA). The sequence is that of Protein virilizer homolog from Homo sapiens (Human).